We begin with the raw amino-acid sequence, 336 residues long: NADH-cytochrome b5 reductase 2 (336 aa).

A helical transmembrane segment spans residues 28–50 (GGSSNGALYVGIGAAGLAGAYIY). One can recognise an FAD-binding FR-type domain in the interval 84–189 (QGFISLLLDK…KGPIPKYPWS (106 aa)). Residue 192-227 (KHEHIALIAGGTGITPMWQTARAIFKNPEDKTKVTL) participates in FAD binding.

This sequence belongs to the flavoprotein pyridine nucleotide cytochrome reductase family. It depends on FAD as a cofactor.

The protein resides in the mitochondrion outer membrane. The enzyme catalyses 2 Fe(III)-[cytochrome b5] + NADH = 2 Fe(II)-[cytochrome b5] + NAD(+) + H(+). Its function is as follows. May mediate the reduction of outer membrane cytochrome b5. The chain is NADH-cytochrome b5 reductase 2 (MCR1) from Phaeosphaeria nodorum (strain SN15 / ATCC MYA-4574 / FGSC 10173) (Glume blotch fungus).